Reading from the N-terminus, the 460-residue chain is MYPGKVYRGVKEIRGSLLIVDGIEEAAYDEVVKIYGKDSRERFGRVLETSIGQAVVQVLGDREGLETDTLLKFTGSTFKIRVSEDVIGRVFNGRFEPIDGLPPILSGELREITGEPINPISREYPHDFIQTGVSAIDGLFSMVRGQKLPIFSVSGLPHNLLAAQVARQATVRGEGEQFAVVFAGIGLRKTEAEFFLEQFRETGAIERLVAVLNMADDPAVERLMTPRIALTVAEYLAFDLDMHVLVIMSDMTNYCEALREVSSARGEIPGRLGYPGYMYSDLATIYERAGVIKGKKGSITLFPILTMPGGDLRHPIPDLTGYITEGQIFLSQEMYAQGIYPPINILPSLSRLMKSGIGPGKTREDHRYLADQLYDAYSRGVKARDLARIIGEIGLSERNRRFLKFAEEFENKFVNQGFYENRSIEETLDLGWQVLSILPEEELVRIPQKIIEKYHPKYRS.

Belongs to the ATPase alpha/beta chains family. As to quaternary structure, has multiple subunits with at least A(3), B(3), C, D, E, F, H, I and proteolipid K(x).

It localises to the cell membrane. In terms of biological role, component of the A-type ATP synthase that produces ATP from ADP in the presence of a proton gradient across the membrane. The B chain is a regulatory subunit. The chain is A-type ATP synthase subunit B from Thermofilum pendens (strain DSM 2475 / Hrk 5).